The chain runs to 131 residues: Glycine cleavage system H protein (131 aa).

A Lipoyl-binding domain is found at 24–106 (TVTIGITDHA…YEDGWIIKLK (83 aa)). An N6-lipoyllysine modification is found at Lys65.

This sequence belongs to the GcvH family. As to quaternary structure, the glycine cleavage system is composed of four proteins: P, T, L and H. (R)-lipoate is required as a cofactor.

The glycine cleavage system catalyzes the degradation of glycine. The H protein shuttles the methylamine group of glycine from the P protein to the T protein. The polypeptide is Glycine cleavage system H protein (Chromohalobacter salexigens (strain ATCC BAA-138 / DSM 3043 / CIP 106854 / NCIMB 13768 / 1H11)).